The following is a 484-amino-acid chain: Adenylyltransferase and sulfurtransferase uba4 (484 aa).

Over residues 39 to 49 (AKAQSAAATTA) the composition is skewed to low complexity. Residues 39–58 (AKAQSAAATTAGDNHDKPRR) are disordered. ATP contacts are provided by residues Gly-98, Asp-119, 126-130 (SNLHR), Lys-143, and 187-188 (DN). 2 residues coordinate Zn(2+): Cys-236 and Cys-239. Cys-253 serves as the catalytic Glycyl thioester intermediate; for adenylyltransferase activity. 2 residues coordinate Zn(2+): Cys-313 and Cys-316. Residues 370–482 (PEKTPTLIDV…WREQVDPEWP (113 aa)) form the Rhodanese domain. Cys-437 functions as the Cysteine persulfide intermediate; for sulfurtransferase activity in the catalytic mechanism.

The protein in the N-terminal section; belongs to the HesA/MoeB/ThiF family. UBA4 subfamily. Requires Zn(2+) as cofactor.

Its subcellular location is the cytoplasm. The protein resides in the cytosol. It catalyses the reaction [molybdopterin-synthase sulfur-carrier protein]-C-terminal Gly-Gly + ATP + H(+) = [molybdopterin-synthase sulfur-carrier protein]-C-terminal Gly-Gly-AMP + diphosphate. The catalysed reaction is [molybdopterin-synthase sulfur-carrier protein]-C-terminal Gly-Gly-AMP + S-sulfanyl-L-cysteinyl-[cysteine desulfurase] + AH2 = [molybdopterin-synthase sulfur-carrier protein]-C-terminal-Gly-aminoethanethioate + L-cysteinyl-[cysteine desulfurase] + A + AMP + 2 H(+). Its pathway is tRNA modification; 5-methoxycarbonylmethyl-2-thiouridine-tRNA biosynthesis. It functions in the pathway cofactor biosynthesis; molybdopterin biosynthesis. Plays a central role in 2-thiolation of mcm(5)S(2)U at tRNA wobble positions of cytosolic tRNA(Lys), tRNA(Glu) and tRNA(Gln). Also essential during biosynthesis of the molybdenum cofactor. Acts by mediating the C-terminal thiocarboxylation of sulfur carriers urm1 and mocs2a. Its N-terminus first activates urm1 and mocs2a as acyl-adenylates (-COAMP), then the persulfide sulfur on the catalytic cysteine is transferred to urm1 and mocs2a to form thiocarboxylation (-COSH) of their C-terminus. The reaction probably involves hydrogen sulfide that is generated from the persulfide intermediate and that acts as a nucleophile towards urm1 and mocs2a. Subsequently, a transient disulfide bond is formed. Does not use thiosulfate as sulfur donor; nfs1 probably acting as a sulfur donor for thiocarboxylation reactions. The sequence is that of Adenylyltransferase and sulfurtransferase uba4 from Aspergillus terreus (strain NIH 2624 / FGSC A1156).